Consider the following 919-residue polypeptide: Alpha-amylase (919 aa).

An N-terminal signal peptide occupies residues 1–33; it reads MPATRRTARVRRVAAVTVTALAAALLPPLAARA. Residues Asn182 and Asp281 each contribute to the Ca(2+) site. Asp312 (nucleophile) is an active-site residue. A Ca(2+)-binding site is contributed by His316. Glu346 serves as the catalytic Proton donor. The segment at 704–729 is disordered; the sequence is ASGRLHHRHPARRGGAHRRLPGPRGR. A compositionally biased stretch (basic residues) spans 707–724; sequence RLHHRHPARRGGAHRRLP.

Belongs to the glycosyl hydrolase 13 family. As to quaternary structure, monomer. It depends on Ca(2+) as a cofactor.

Its subcellular location is the secreted. It carries out the reaction Endohydrolysis of (1-&gt;4)-alpha-D-glucosidic linkages in polysaccharides containing three or more (1-&gt;4)-alpha-linked D-glucose units.. The chain is Alpha-amylase (amy) from Streptomyces lividans.